A 542-amino-acid chain; its full sequence is Protein GDAP2 homolog (542 aa).

The Macro domain occupies 58–237; it reads RSPFPLSKDV…TYEVLAPLYF (180 aa). Residues 277–304 are disordered; that stretch reads PQHSVHMRHGHTDDDSDVSPHDMEGNSS. The span at 286–300 shows a compositional bias: basic and acidic residues; the sequence is GHTDDDSDVSPHDME. One can recognise a CRAL-TRIO domain in the interval 373 to 530; the sequence is QVEDLTEVSG…YITEYDMATN (158 aa).

This sequence belongs to the GDAP2 family.

This is Protein GDAP2 homolog from Drosophila pseudoobscura pseudoobscura (Fruit fly).